The chain runs to 92 residues: N(2)-fixation sustaining protein CowN (92 aa).

It belongs to the CowN family.

Functionally, is required to sustain N(2)-dependent growth in the presence of low levels of carbon monoxide (CO). Probably acts by protecting the N(2) fixation ability of the nitrogenase complex, which is inactivated in the presence of CO. In Cereibacter sphaeroides (strain ATCC 17025 / ATH 2.4.3) (Rhodobacter sphaeroides), this protein is N(2)-fixation sustaining protein CowN.